The following is a 546-amino-acid chain: MAKDIKFDIQARNGIKRGVDALANAVKVTLGPKGRNVIISKSFGAPTVTKDGVTVAKEIELEDPLENMGAQMVKEVASKTNDLAGDGTTTATVLAQAIVQEGLKNVAAGANPMDLKRGIDKAVEALTADLAKQTKEVGDSSEKIKQVASISANNDDMIGDLIAQAFGKVGKEGVITVEEAKGTETHVDVVEGMQFDRGYLSPYFVTNSEKMTADLEDPYILLFDKKISSMKDLLPVLEPVAQSGKPLLIIAEDVDGEALATLVVNKLRGSLKIAAVKAPGFGDRRKAMLEDIAILTGGTVISEERGFSLENATIDMLGTAEKVAIDKDNTTVVNGAGDDKAIKERVNQIKAQIESTTSDYDREKLQERLAKLAGGVAVLYVGAASEVEMKEKKDRVDDALHATRAAVEEGIVAGGGVALIRAQVVLSKIKTENPDEATGVKIVSKAIESPLRTIVENAGGEGSVVINKVLEGKKDFGYDAKTETYVDMLKAGIIDPKKVTRVALENAASVAGMILTTECALTDIPEDNAGGGGMPQGMGGGMPGMM.

Residues 29 to 32 (TLGP), Lys-50, 86 to 90 (DGTTT), Gly-415, and Asp-495 each bind ATP. The segment at 526–546 (EDNAGGGGMPQGMGGGMPGMM) is disordered. Positions 529–546 (AGGGGMPQGMGGGMPGMM) are enriched in gly residues.

It belongs to the chaperonin (HSP60) family. As to quaternary structure, forms a cylinder of 14 subunits composed of two heptameric rings stacked back-to-back. Interacts with the co-chaperonin GroES.

Its subcellular location is the cytoplasm. The catalysed reaction is ATP + H2O + a folded polypeptide = ADP + phosphate + an unfolded polypeptide.. Functionally, together with its co-chaperonin GroES, plays an essential role in assisting protein folding. The GroEL-GroES system forms a nano-cage that allows encapsulation of the non-native substrate proteins and provides a physical environment optimized to promote and accelerate protein folding. This is Chaperonin GroEL from Christiangramia forsetii (strain DSM 17595 / CGMCC 1.15422 / KT0803) (Gramella forsetii).